A 211-amino-acid polypeptide reads, in one-letter code: Urease accessory protein UreF (211 aa).

Positions 68–93 (LAPDGADRETDARTPSPAARDASRSQ) are disordered.

The protein belongs to the UreF family. UreD, UreF and UreG form a complex that acts as a GTP-hydrolysis-dependent molecular chaperone, activating the urease apoprotein by helping to assemble the nickel containing metallocenter of UreC. The UreE protein probably delivers the nickel.

The protein resides in the cytoplasm. Functionally, required for maturation of urease via the functional incorporation of the urease nickel metallocenter. The protein is Urease accessory protein UreF of Mycobacterium marinum (strain ATCC BAA-535 / M).